A 440-amino-acid chain; its full sequence is uncharacterized protein (440 aa).

Positions methionine 1–alanine 29 are cleaved as a signal peptide.

The protein belongs to the Mj S-layer protein family.

This is an uncharacterized protein from Methanocaldococcus jannaschii (strain ATCC 43067 / DSM 2661 / JAL-1 / JCM 10045 / NBRC 100440) (Methanococcus jannaschii).